A 363-amino-acid chain; its full sequence is Mitochondrial RNA-splicing protein MRS1 (363 aa).

In terms of assembly, homodimer. Forms a ribonucleoprotein complex composed of maturase bI3 and 2 dimers of MRS1 that assemble around the bI3 RNA.

It localises to the mitochondrion matrix. In terms of biological role, function in mitochondrial RNA splicing in the excision of mitochondrial group I introns aI5 beta from COX1 and bI3 from COB transcripts and thus would be involved in obtaining the correct structure of the intron, to allow the RNA catalyzed reactions to occur. The polypeptide is Mitochondrial RNA-splicing protein MRS1 (MRS1) (Saccharomyces cerevisiae (strain ATCC 204508 / S288c) (Baker's yeast)).